Reading from the N-terminus, the 441-residue chain is Ribosomal protein uS12 methylthiotransferase RimO (441 aa).

The MTTase N-terminal domain occupies 8–118; it reads PKIGFVSLGC…VLQHVHHYVP (111 aa). 6 residues coordinate [4Fe-4S] cluster: Cys-17, Cys-53, Cys-82, Cys-150, Cys-154, and Cys-157. Residues 136–373 form the Radical SAM core domain; sequence LTPRHYAYLK…MQLQQQISAE (238 aa). The TRAM domain occupies 376–441; sequence QEKVGREILV…DEYDLWGSRV (66 aa).

This sequence belongs to the methylthiotransferase family. RimO subfamily. [4Fe-4S] cluster is required as a cofactor.

Its subcellular location is the cytoplasm. It carries out the reaction L-aspartate(89)-[ribosomal protein uS12]-hydrogen + (sulfur carrier)-SH + AH2 + 2 S-adenosyl-L-methionine = 3-methylsulfanyl-L-aspartate(89)-[ribosomal protein uS12]-hydrogen + (sulfur carrier)-H + 5'-deoxyadenosine + L-methionine + A + S-adenosyl-L-homocysteine + 2 H(+). In terms of biological role, catalyzes the methylthiolation of an aspartic acid residue of ribosomal protein uS12. In Salmonella paratyphi A (strain ATCC 9150 / SARB42), this protein is Ribosomal protein uS12 methylthiotransferase RimO.